Here is a 285-residue protein sequence, read N- to C-terminus: Proteasome subunit beta (285 aa).

A propeptide spans 1–50 (removed in mature form; by autocatalysis); the sequence is MTAEHPARLPQAFMTPGSSSFVDFLAAHDPSLLPSSRALPAGSAPPAPHG. Residue threonine 51 is the Nucleophile of the active site. The interval 266 to 285 is disordered; the sequence is RTRQARSSRSRHGSLGGDLR.

This sequence belongs to the peptidase T1B family. The 20S proteasome core is composed of 14 alpha and 14 beta subunits that assemble into four stacked heptameric rings, resulting in a barrel-shaped structure. The two inner rings, each composed of seven catalytic beta subunits, are sandwiched by two outer rings, each composed of seven alpha subunits. The catalytic chamber with the active sites is on the inside of the barrel. Has a gated structure, the ends of the cylinder being occluded by the N-termini of the alpha-subunits. Is capped by the proteasome-associated ATPase, ARC.

Its subcellular location is the cytoplasm. The catalysed reaction is Cleavage of peptide bonds with very broad specificity.. It functions in the pathway protein degradation; proteasomal Pup-dependent pathway. The formation of the proteasomal ATPase ARC-20S proteasome complex, likely via the docking of the C-termini of ARC into the intersubunit pockets in the alpha-rings, may trigger opening of the gate for substrate entry. Interconversion between the open-gate and close-gate conformations leads to a dynamic regulation of the 20S proteasome proteolysis activity. Its function is as follows. Component of the proteasome core, a large protease complex with broad specificity involved in protein degradation. The chain is Proteasome subunit beta from Sanguibacter keddieii (strain ATCC 51767 / DSM 10542 / NCFB 3025 / ST-74).